The sequence spans 98 residues: UPF0175 protein VNG_0066H (98 aa).

This sequence belongs to the UPF0175 family.

This chain is UPF0175 protein VNG_0066H, found in Halobacterium salinarum (strain ATCC 700922 / JCM 11081 / NRC-1) (Halobacterium halobium).